Reading from the N-terminus, the 453-residue chain is Serine/threonine-protein phosphatase 2A regulatory subunit B'' subunit gamma (453 aa).

A disordered region spans residues 1-27 (MDWKDVLRRRLASPNSDPKRKKSEQEL). EF-hand domains follow at residues 273–308 (PSAL…TMTN) and 341–376 (KEPA…IQEL). Ca(2+) contacts are provided by aspartate 286, aspartate 288, asparagine 290, methionine 292, and glutamate 297.

As to quaternary structure, interacts with MCM3AP/GANP, PPP5C, and the phosphatase 2A core enzyme composed of the PPP2CA catalytic subunit and the constant regulatory subunit PPP2R1A. Finds in a complex with ABCB1, TFPI2 and PPP2R3C; leading to the dephosphorylation of ABCB1.

It localises to the nucleus. Its subcellular location is the cytoplasm. In terms of biological role, may regulate MCM3AP phosphorylation through phosphatase recruitment. May act as a negative regulator of ABCB1 expression and function through the dephosphorylation of ABCB1 by TFPI2/PPP2R3C complex. May play a role in the activation-induced cell death of B-cells. In Rattus norvegicus (Rat), this protein is Serine/threonine-protein phosphatase 2A regulatory subunit B'' subunit gamma (Ppp2r3c).